The sequence spans 472 residues: Uronate isomerase (472 aa).

This sequence belongs to the metallo-dependent hydrolases superfamily. Uronate isomerase family.

It catalyses the reaction D-glucuronate = D-fructuronate. It carries out the reaction aldehydo-D-galacturonate = keto-D-tagaturonate. Its pathway is carbohydrate metabolism; pentose and glucuronate interconversion. The protein is Uronate isomerase of Shouchella clausii (strain KSM-K16) (Alkalihalobacillus clausii).